A 407-amino-acid chain; its full sequence is Protein-glutamine gamma-glutamyltransferase (407 aa).

The first 31 residues, 1 to 31 (MRIRRRALVFATMSAVLCTAGFMPSAGEAAA), serve as a signal peptide directing secretion. Positions 32–76 (DNGAGEETKSYAETYRLTADDVANINALNESAPAASSAGPSFRAP) are excised as a propeptide. Residues 62–72 (SAPAASSAGPS) are compositionally biased toward low complexity. The tract at residues 62 to 98 (SAPAASSAGPSFRAPDSDDRVTPPAEPLDRMPDPYRP) is disordered. A compositionally biased stretch (basic and acidic residues) spans 76–94 (PDSDDRVTPPAEPLDRMPD). Cysteine 140 is an active-site residue. The disordered stretch occupies residues 282 to 322 (QDRSSSADKRKYGDPDAFRPAPGTGLVDMSRDRNIPRSPTS). The span at 286–298 (SSADKRKYGDPDA) shows a compositional bias: basic and acidic residues. Catalysis depends on residues aspartate 331 and histidine 350.

The protein belongs to the bacterial TGase family.

The catalysed reaction is L-glutaminyl-[protein] + L-lysyl-[protein] = [protein]-L-lysyl-N(6)-5-L-glutamyl-[protein] + NH4(+). In terms of biological role, catalyzes the cross-linking of proteins and the conjugation of polyamines to proteins. The sequence is that of Protein-glutamine gamma-glutamyltransferase from Streptomyces mobaraensis (Streptoverticillium mobaraense).